Reading from the N-terminus, the 374-residue chain is Ribosomal RNA large subunit methyltransferase G (374 aa).

It belongs to the methyltransferase superfamily. RlmG family.

Its subcellular location is the cytoplasm. The catalysed reaction is guanosine(1835) in 23S rRNA + S-adenosyl-L-methionine = N(2)-methylguanosine(1835) in 23S rRNA + S-adenosyl-L-homocysteine + H(+). Functionally, specifically methylates the guanine in position 1835 (m2G1835) of 23S rRNA. The protein is Ribosomal RNA large subunit methyltransferase G of Pseudomonas aeruginosa (strain ATCC 15692 / DSM 22644 / CIP 104116 / JCM 14847 / LMG 12228 / 1C / PRS 101 / PAO1).